The primary structure comprises 547 residues: Probable ABC transporter periplasmic-binding protein SapA (547 aa).

The signal sequence occupies residues 1–21 (MRQVLSSLLVIAGLVSGQAIA).

This sequence belongs to the bacterial solute-binding protein 5 family.

It localises to the periplasm. Not part of a putrescine export system. Very similar to a S.typhimurium protein implicated in antimicrobial peptide resistance, but the SapBCDF operon in E.coli is implicated in putrescine export. This is Probable ABC transporter periplasmic-binding protein SapA (sapA) from Escherichia coli (strain K12).